Consider the following 759-residue polypeptide: Phosphoribosylformylglycinamidine synthase subunit PurL (759 aa).

The active site involves H46. Positions 49 and 88 each coordinate ATP. E90 serves as a coordination point for Mg(2+). Substrate-binding positions include 91-94 and R113; that span reads SHNH. The active-site Proton acceptor is H92. A Mg(2+)-binding site is contributed by D114. Q237 serves as a coordination point for substrate. D265 is a Mg(2+) binding site. 309 to 311 lines the substrate pocket; it reads ESQ. The ATP site is built by D498 and G535. Mg(2+) is bound at residue N536. Residue S538 participates in substrate binding.

The protein belongs to the FGAMS family. In terms of assembly, monomer. Part of the FGAM synthase complex composed of 1 PurL, 1 PurQ and 2 PurS subunits.

Its subcellular location is the cytoplasm. It carries out the reaction N(2)-formyl-N(1)-(5-phospho-beta-D-ribosyl)glycinamide + L-glutamine + ATP + H2O = 2-formamido-N(1)-(5-O-phospho-beta-D-ribosyl)acetamidine + L-glutamate + ADP + phosphate + H(+). It functions in the pathway purine metabolism; IMP biosynthesis via de novo pathway; 5-amino-1-(5-phospho-D-ribosyl)imidazole from N(2)-formyl-N(1)-(5-phospho-D-ribosyl)glycinamide: step 1/2. Its function is as follows. Part of the phosphoribosylformylglycinamidine synthase complex involved in the purines biosynthetic pathway. Catalyzes the ATP-dependent conversion of formylglycinamide ribonucleotide (FGAR) and glutamine to yield formylglycinamidine ribonucleotide (FGAM) and glutamate. The FGAM synthase complex is composed of three subunits. PurQ produces an ammonia molecule by converting glutamine to glutamate. PurL transfers the ammonia molecule to FGAR to form FGAM in an ATP-dependent manner. PurS interacts with PurQ and PurL and is thought to assist in the transfer of the ammonia molecule from PurQ to PurL. The sequence is that of Phosphoribosylformylglycinamidine synthase subunit PurL from Anaeromyxobacter dehalogenans (strain 2CP-C).